The chain runs to 323 residues: MFEQEQWQPTANVETLFARAKIINNIRRFFTDRGVLEVETPILSEFGVTDVHLSTFSTEFVAPQAERSKTLWLNTSPEYHMKRLLAAGTGAIFQLCHVFRNEEAGSRHNPEFTMLEWYRPHFDMYRLINEVDDLLQQILDCEPAESMSYQFAFQEFVGVDPLSAERPILVELARKYNFMCDLDEDRDTLLQFLFSTVVEPKIGQERPVAVYHFPATQAALAQISSEDHRVAERFEFYYKGLELANGFHELTDHREQLHRFEQDNVQRAKLALPQREIDRRLLGALQAGVPNTSGVALGVDRLVMIALDKKRIEEVMAFAINNA.

76-78 (SPE) is a binding site for substrate. ATP contacts are provided by residues 100 to 102 (RNE) and asparagine 109. Tyrosine 118 contacts substrate. 242 to 243 (EL) is an ATP binding site. Glutamate 249 serves as a coordination point for substrate. An ATP-binding site is contributed by glycine 298.

The protein belongs to the class-II aminoacyl-tRNA synthetase family. EpmA subfamily. Homodimer.

It carries out the reaction D-beta-lysine + L-lysyl-[protein] + ATP = N(6)-((3R)-3,6-diaminohexanoyl)-L-lysyl-[protein] + AMP + diphosphate + H(+). In terms of biological role, with EpmB is involved in the beta-lysylation step of the post-translational modification of translation elongation factor P (EF-P). Catalyzes the ATP-dependent activation of (R)-beta-lysine produced by EpmB, forming a lysyl-adenylate, from which the beta-lysyl moiety is then transferred to the epsilon-amino group of a conserved specific lysine residue in EF-P. This Actinobacillus succinogenes (strain ATCC 55618 / DSM 22257 / CCUG 43843 / 130Z) protein is Elongation factor P--(R)-beta-lysine ligase.